A 317-amino-acid polypeptide reads, in one-letter code: Beta-ketoacyl-[acyl-carrier-protein] synthase III (317 aa).

Catalysis depends on residues Cys112 and His244. The segment at 245–249 (QANLR) is ACP-binding. Residue Asn274 is part of the active site.

It belongs to the thiolase-like superfamily. FabH family. Homodimer.

The protein localises to the cytoplasm. It catalyses the reaction malonyl-[ACP] + acetyl-CoA + H(+) = 3-oxobutanoyl-[ACP] + CO2 + CoA. Its pathway is lipid metabolism; fatty acid biosynthesis. Functionally, catalyzes the condensation reaction of fatty acid synthesis by the addition to an acyl acceptor of two carbons from malonyl-ACP. Catalyzes the first condensation reaction which initiates fatty acid synthesis and may therefore play a role in governing the total rate of fatty acid production. Possesses both acetoacetyl-ACP synthase and acetyl transacylase activities. Its substrate specificity determines the biosynthesis of branched-chain and/or straight-chain of fatty acids. In Enterobacter sp. (strain 638), this protein is Beta-ketoacyl-[acyl-carrier-protein] synthase III.